A 557-amino-acid chain; its full sequence is Potassium-transporting ATPase potassium-binding subunit (557 aa).

Helical transmembrane passes span 5–25, 63–83, 132–152, 170–190, 253–273, 283–303, 329–349, 356–376, 379–399, 416–436, 484–504, and 526–546; these read GFLL…PLGS, LSAI…MLLG, GLTV…FALI, LLRI…LFFI, FVQM…FGEV, LLWA…WAEV, VLVS…AVIA, ALGG…FGGV, GLYG…LMIG, LTAL…ALAM, LLAL…MAIA, and LFVG…FIPA.

Belongs to the KdpA family. As to quaternary structure, the system is composed of three essential subunits: KdpA, KdpB and KdpC.

It localises to the cell inner membrane. Functionally, part of the high-affinity ATP-driven potassium transport (or Kdp) system, which catalyzes the hydrolysis of ATP coupled with the electrogenic transport of potassium into the cytoplasm. This subunit binds the periplasmic potassium ions and delivers the ions to the membrane domain of KdpB through an intramembrane tunnel. This chain is Potassium-transporting ATPase potassium-binding subunit, found in Escherichia coli O6:H1 (strain CFT073 / ATCC 700928 / UPEC).